Reading from the N-terminus, the 101-residue chain is RNA-3 uncharacterized 11.6 kDa protein (101 aa).

This Beet necrotic yellow vein mosaic virus (isolate Yugoslavia/G1) (BNYVV) protein is RNA-3 uncharacterized 11.6 kDa protein.